A 533-amino-acid chain; its full sequence is Glucose-6-phosphate isomerase (533 aa).

Catalysis depends on Glu330, which acts as the Proton donor. Catalysis depends on residues His359 and Lys461.

This sequence belongs to the GPI family.

The protein localises to the cytoplasm. It carries out the reaction alpha-D-glucose 6-phosphate = beta-D-fructose 6-phosphate. Its pathway is carbohydrate biosynthesis; gluconeogenesis. It functions in the pathway carbohydrate degradation; glycolysis; D-glyceraldehyde 3-phosphate and glycerone phosphate from D-glucose: step 2/4. In terms of biological role, catalyzes the reversible isomerization of glucose-6-phosphate to fructose-6-phosphate. The polypeptide is Glucose-6-phosphate isomerase (Prochlorococcus marinus (strain SARG / CCMP1375 / SS120)).